The primary structure comprises 322 residues: HPr kinase/phosphorylase (322 aa).

Active-site residues include histidine 146 and lysine 167. An ATP-binding site is contributed by 161–168 (GDSGLGKS). Serine 168 contributes to the Mg(2+) binding site. Aspartate 185 functions as the Proton acceptor; for phosphorylation activity. Proton donor; for dephosphorylation activity in the catalytic mechanism. Residues 209-218 (LEVRGLGLLD) form an important for the catalytic mechanism of both phosphorylation and dephosphorylation region. Glutamate 210 serves as a coordination point for Mg(2+). Arginine 250 is an active-site residue. Residues 271–276 (QVAAGR) form an important for the catalytic mechanism of dephosphorylation region.

This sequence belongs to the HPrK/P family. In terms of assembly, homohexamer. The cofactor is Mg(2+).

The enzyme catalyses [HPr protein]-L-serine + ATP = [HPr protein]-O-phospho-L-serine + ADP + H(+). It carries out the reaction [HPr protein]-O-phospho-L-serine + phosphate + H(+) = [HPr protein]-L-serine + diphosphate. Functionally, catalyzes the ATP- as well as the pyrophosphate-dependent phosphorylation of a specific serine residue in HPr, a phosphocarrier protein of the phosphoenolpyruvate-dependent sugar phosphotransferase system (PTS). HprK/P also catalyzes the pyrophosphate-producing, inorganic phosphate-dependent dephosphorylation (phosphorolysis) of seryl-phosphorylated HPr (P-Ser-HPr). The polypeptide is HPr kinase/phosphorylase (Burkholderia mallei (strain NCTC 10247)).